We begin with the raw amino-acid sequence, 577 residues long: MNIQSILSDKIKQAMVIAGADQSCDALVRQSGKPQFGDYQANGIMAAAKKLGLNPREFAQKVLDNLQLSDIAEKLEIAGPGFINIFLNPTWLTTEISAALSHKNLGIQATNKQTVVIDYSSPNVAKEMHVGHLRSTIIGDAVARTLEFLGHNVIRANHVGDWGTQFGMLIAYLEKMQNEHASEMELQDLEAFYREAKKHYDEDEIFAEKARNYVVKLQGGDEYCRAMWKRLVDITMQQNQHNYDRLNVTLTEKDVMGESLYNPMLPSIVEDLKKQGLAVEDDGALVVYLDEFKNKEGDPMGVIVQKKDGGFLYTTTDIAAAKYRYETLKANRALVFSDTRQSQHMQQAWLITRKAGYVPDSFSLEHKNFGMMLGKDGKPFKTRTGGTVKLADLLDEAIERATVLINEKNTNLSNDEKQAVIEAIGIGSVKYADLSKNRTTDYVFDWDNMLSFEGNTAPYMQYAYTRIRSIFNKTEINSTALLAAPLTIKDDKERTLAIKLLQFEEAVQTVGKEGTPHVLCAYLYELAGIFSSFYEHCPILNAEDEAVKLSRLKLALLTEKTLKQGLELLGIKTVEKM.

A 'HIGH' region motif is present at residues 122–132; sequence PNVAKEMHVGH.

Belongs to the class-I aminoacyl-tRNA synthetase family. As to quaternary structure, monomer.

The protein localises to the cytoplasm. It carries out the reaction tRNA(Arg) + L-arginine + ATP = L-arginyl-tRNA(Arg) + AMP + diphosphate. The protein is Arginine--tRNA ligase of Haemophilus influenzae (strain PittEE).